The following is a 192-amino-acid chain: Phosphomevalonate kinase (192 aa).

ATP contacts are provided by residues 17–23 (KRKSGKD) and Arg-141. Asn-170 is a substrate binding site. ATP-binding residues include His-171, Arg-176, and Gln-180.

As to quaternary structure, monomer. Heart, liver, skeletal muscle, kidney, and pancreas. Lower level in brain, placenta and lung.

The protein localises to the cytoplasm. Its subcellular location is the cytosol. The catalysed reaction is (R)-5-phosphomevalonate + ATP = (R)-5-diphosphomevalonate + ADP. The protein operates within isoprenoid biosynthesis; isopentenyl diphosphate biosynthesis via mevalonate pathway; isopentenyl diphosphate from (R)-mevalonate: step 2/3. In terms of biological role, catalyzes the reversible ATP-dependent phosphorylation of mevalonate 5-phosphate to produce mevalonate diphosphate and ADP, a key step in the mevalonic acid mediated biosynthesis of isopentenyl diphosphate and other polyisoprenoid metabolites. The sequence is that of Phosphomevalonate kinase (PMVK) from Homo sapiens (Human).